Consider the following 337-residue polypeptide: Monoacylglycerol lipase abhd6-A (337 aa).

At 1 to 19 (MDLDVLNMFLVAGGTLLVP) the chain is on the extracellular side. A helical; Signal-anchor for type II membrane protein transmembrane segment spans residues 20-42 (ILAFVTSFLLWPAALIKIYYWYW). Residues 43–337 (RRALGMQVKF…QSTENNKKHE (295 aa)) are Cytoplasmic-facing. The AB hydrolase-1 domain occupies 73–313 (SVLMLHGFSA…CGHSVVMERP (241 aa)). The active-site Nucleophile is Ser-148. Residues Asp-278 and His-306 each act as charge relay system in the active site.

Belongs to the AB hydrolase superfamily.

The protein resides in the late endosome membrane. Its subcellular location is the lysosome membrane. It is found in the mitochondrion membrane. The enzyme catalyses Hydrolyzes glycerol monoesters of long-chain fatty acids.. It catalyses the reaction 1-octanoylglycerol + H2O = octanoate + glycerol + H(+). The catalysed reaction is 1-decanoylglycerol + H2O = decanoate + glycerol + H(+). It carries out the reaction 1-dodecanoylglycerol + H2O = dodecanoate + glycerol + H(+). The enzyme catalyses 1-tetradecanoylglycerol + H2O = tetradecanoate + glycerol + H(+). It catalyses the reaction 2-hexadecanoylglycerol + H2O = glycerol + hexadecanoate + H(+). The catalysed reaction is 2-(9Z-octadecenoyl)-glycerol + H2O = glycerol + (9Z)-octadecenoate + H(+). It carries out the reaction 1-(9Z-octadecenoyl)-glycerol + H2O = glycerol + (9Z)-octadecenoate + H(+). The enzyme catalyses 2-(9Z,12Z-octadecadienoyl)-glycerol + H2O = (9Z,12Z)-octadecadienoate + glycerol + H(+). It catalyses the reaction 2-(5Z,8Z,11Z,14Z-eicosatetraenoyl)-glycerol + H2O = glycerol + (5Z,8Z,11Z,14Z)-eicosatetraenoate + H(+). The catalysed reaction is 1-(5Z,8Z,11Z,14Z-eicosatetraenoyl)-glycerol + H2O = glycerol + (5Z,8Z,11Z,14Z)-eicosatetraenoate + H(+). It carries out the reaction 1-(9Z,12Z-octadecadienoyl)-glycerol + H2O = (9Z,12Z)-octadecadienoate + glycerol + H(+). The enzyme catalyses 3-(9Z-octadecenoyl)-sn-glycero-1-phospho-(3'-(9Z-octadecenoyl)-1'-sn-glycerol) + H2O = 3-(9Z-octadecenoyl)-sn-glycero-1-phospho-(1'-sn-glycerol) + (9Z)-octadecenoate + H(+). It catalyses the reaction (S,S)-2-(9Z-octadecenoyl)-sn-glycero-1-phospho-(2'-(9Z-octadecenoyl)-1'-sn-glycerol) + H2O = (S,S)-2-(9Z-octadecenoyl)-sn-glycero-1-phospho-(1'-sn-glycerol) + (9Z)-octadecenoate + H(+). The catalysed reaction is (R,R)-2-(9Z-octadecenoyl)-sn-glycero-3-phospho-(2'-(9Z-octadecenoyl)-3'-sn-glycerol) + H2O = (R,R)-2-(9Z-octadecenoyl)-sn-glycero-3-phospho-(3'-sn-glycerol) + (9Z)-octadecenoate + H(+). Lipase that preferentially hydrolysis medium-chain saturated monoacylglycerols including 2-arachidonoylglycerol. Through 2-arachidonoylglycerol degradation may regulate endocannabinoid signaling pathways. Also has a lysophosphatidyl lipase activity with a preference for lysophosphatidylglycerol among other lysophospholipids. Also able to degrade bis(monoacylglycero)phosphate (BMP) and constitutes the major enzyme for BMP catabolism. BMP, also known as lysobisphosphatidic acid, is enriched in late endosomes and lysosomes and plays a key role in the formation of intraluminal vesicles and in lipid sorting. The protein is Monoacylglycerol lipase abhd6-A (abhd6-a) of Xenopus laevis (African clawed frog).